The following is a 344-amino-acid chain: Sulfate/thiosulfate import ATP-binding protein CysA (344 aa).

Residues 9-239 form the ABC transporter domain; that stretch reads IQVSQVSKQF…PATPFVMSFI (231 aa). 41 to 48 contacts ATP; sequence GPSGSGKS.

It belongs to the ABC transporter superfamily. Sulfate/tungstate importer (TC 3.A.1.6) family. As to quaternary structure, the complex is composed of two ATP-binding proteins (CysA), two transmembrane proteins (CysT and CysW) and a solute-binding protein (CysP).

It localises to the cell inner membrane. The enzyme catalyses sulfate(out) + ATP + H2O = sulfate(in) + ADP + phosphate + H(+). It catalyses the reaction thiosulfate(out) + ATP + H2O = thiosulfate(in) + ADP + phosphate + H(+). Part of the ABC transporter complex CysAWTP involved in sulfate/thiosulfate import. Responsible for energy coupling to the transport system. The polypeptide is Sulfate/thiosulfate import ATP-binding protein CysA (Synechococcus elongatus (strain ATCC 33912 / PCC 7942 / FACHB-805) (Anacystis nidulans R2)).